A 422-amino-acid polypeptide reads, in one-letter code: Phytoene synthase, chloroplastic (422 aa).

The N-terminal 83 residues, Met1–Ala83, are a transit peptide targeting the chloroplast.

The protein belongs to the phytoene/squalene synthase family. Monomer.

It is found in the plastid. The protein resides in the chloroplast. It catalyses the reaction 2 (2E,6E,10E)-geranylgeranyl diphosphate = 15-cis-phytoene + 2 diphosphate. The protein operates within carotenoid biosynthesis; phytoene biosynthesis; all-trans-phytoene from geranylgeranyl diphosphate: step 1/1. Functionally, catalyzes the reaction from prephytoene diphosphate to phytoene. The chain is Phytoene synthase, chloroplastic (PSY) from Cucumis melo (Muskmelon).